We begin with the raw amino-acid sequence, 128 residues long: Arsenic resistance transcriptional regulator ArsR1 (128 aa).

Positions 11 to 103 constitute an HTH arsR-type domain; sequence MREILTPPIV…AMLKGVVDAN (93 aa). Residues cysteine 43 and cysteine 45 each contribute to the arsenite site. The H-T-H motif DNA-binding region spans 44–67; sequence VCELTHALELSQPKISRHLAQLRE.

As to quaternary structure, homodimer.

The protein localises to the cytoplasm. Its function is as follows. Binds arsenite and regulates the expression of arsenic efflux pumps. In vitro, also binds antimony and bismuth, but not arsenate. The sequence is that of Arsenic resistance transcriptional regulator ArsR1 from Pseudomonas putida (strain ATCC 47054 / DSM 6125 / CFBP 8728 / NCIMB 11950 / KT2440).